Consider the following 371-residue polypeptide: Cyanide hydratase (371 aa).

The CN hydrolase domain occupies 6–285; sequence YKAAAVTSEP…DGLLYVDIDL (280 aa). The active-site Proton acceptor is the glutamate 46. The active site involves lysine 128. Cysteine 163 serves as the catalytic Nucleophile. The segment covering 339–353 has biased composition (basic and acidic residues); it reads GLNRPLDPPKDERHG. Residues 339–371 are disordered; the sequence is GLNRPLDPPKDERHGIVGVAGQKSAEQRKAGDL.

It belongs to the carbon-nitrogen hydrolase superfamily. Nitrilase family. As to quaternary structure, oligomer of dimers, forming left-handed helical fibers.

The catalysed reaction is formamide = hydrogen cyanide + H2O. Its function is as follows. Catalyzes the hydration of cyanide to formamide. Degradation of cyanide may be important for plant pathogenic fungi in infection of cyanogenic plants. Also acts on 2-cyanopyridine, fumaronitrile and benzonitrile, albeit at a lower rate. This chain is Cyanide hydratase (nit), found in Stereum hirsutum (strain FP-91666) (White-rot fungus).